Consider the following 598-residue polypeptide: MEIALGPLENGGAMTIRGGGEETAGCSQAAPTAGLGDGSQEPAPRGRGCSARRGAEPGERPLPPQPPELPQSRRSPLEEEEGEGDPGLSVAEEQTLGAGALHHQRVLINISGLRFETQLGTLAQFPNTLLGDPAKRLRYFDPLRNEYFFDRNRPSFDGILYYYQSGGRLRRPVNVSLDVFADEIRFYQLGDEAMERFREDEGFIKDEEKPLPRNEFQRQVWLIFEYPESSGSARAIAIVSVLVILISIITFCLETLPEFKDERELLRHPPVPHQPPAAPALGANGSGAVAPASGSTVAPLLPRTLADPFFIVETTCVIWFTFELLVRFFACPSKAEFSRNIMNIIDIVAIFPYFITLGTELAEQQPGGGGGGQNGQQAMSLAILRVIRLVRVFRIFKLSRHSKGLQILGKTLQASMRELGLLIFFLFIGVILFSSAVYFAEADNQGTHFSSIPDAFWWAVVTMTTVGYGDMRPITVGGKIVGSLCAIAGVLTIALPVPVIVSNFNYFYHRETDHEEQAALKEEPGSQSRGTSLDAGGQRKASWSKASLCKAGGSLETADSVRRGSCLLEKYNLKAKSNVDLRRSLYALCLDTSRETDL.

The disordered stretch occupies residues 1–89 (MEIALGPLEN…EEGEGDPGLS (89 aa)). Residues 1 to 195 (MEIALGPLEN…FYQLGDEAME (195 aa)) form a tetramerization domain region. Residues 1 to 231 (MEIALGPLEN…LIFEYPESSG (231 aa)) are Cytoplasmic-facing. The segment covering 60 to 69 (RPLPPQPPEL) has biased composition (pro residues). Residue Lys-205 forms a Glycyl lysine isopeptide (Lys-Gly) (interchain with G-Cter in SUMO) linkage. The helical transmembrane segment at 232 to 253 (SARAIAIVSVLVILISIITFCL) threads the bilayer. Over 254–308 (ETLPEFKDERELLRHPPVPHQPPAAPALGANGSGAVAPASGSTVAPLLPRTLADP) the chain is Extracellular. The helical transmembrane segment at 309–330 (FFIVETTCVIWFTFELLVRFFA) threads the bilayer. Cys-331 is lipidated: S-palmitoyl cysteine. At 331-341 (CPSKAEFSRNI) the chain is on the cytoplasmic side. Residues 342 to 362 (MNIIDIVAIFPYFITLGTELA) form a helical membrane-spanning segment. At 363–380 (EQQPGGGGGGQNGQQAMS) the chain is on the extracellular side. Residues 381–401 (LAILRVIRLVRVFRIFKLSRH) traverse the membrane as a helical; Voltage-sensor segment. Residues 402–416 (SKGLQILGKTLQASM) are Cytoplasmic-facing. An S4-S5 linker region spans residues 403 to 416 (KGLQILGKTLQASM). A helical membrane pass occupies residues 417-438 (RELGLLIFFLFIGVILFSSAVY). Over 439–452 (FAEADNQGTHFSSI) the chain is Extracellular. The segment at residues 453 to 464 (PDAFWWAVVTMT) is an intramembrane region (helical). Residues 465 to 470 (TVGYGD) carry the Selectivity filter motif. Residues 465-472 (TVGYGDMR) lie within the membrane without spanning it. A helical transmembrane segment spans residues 480–508 (IVGSLCAIAGVLTIALPVPVIVSNFNYFY). The Cytoplasmic segment spans residues 509–598 (HRETDHEEQA…CLDTSRETDL (90 aa)). Positions 517–539 (QAALKEEPGSQSRGTSLDAGGQR) are disordered. Lys-521 is covalently cross-linked (Glycyl lysine isopeptide (Lys-Gly) (interchain with G-Cter in SUMO)). Residues 596-598 (TDL) carry the PDZ-binding motif.

This sequence belongs to the potassium channel family. A (Shaker) (TC 1.A.1.2) subfamily. Kv1.5/KCNA5 sub-subfamily. In terms of assembly, homotetramer and heterotetramer of potassium channel proteins. Interacts with DLG1, which enhances channel currents. Forms a ternary complex with DLG1 and CAV3. Interacts with KCNAB1. Interacts with UBE2I. Interacts with XIRP2; the interaction is required for normal action potential configuration in the heart. Post-translationally, glycosylated. Sumoylated on Lys-205, and Lys-521, preferentially with SUMO3. Sumoylation regulates the voltage sensitivity of the channel.

The protein resides in the cell membrane. It catalyses the reaction K(+)(in) = K(+)(out). Voltage-gated potassium channel that mediates transmembrane potassium transport in excitable membranes. Forms tetrameric potassium-selective channels through which potassium ions pass in accordance with their electrochemical gradient. The channel alternates between opened and closed conformations in response to the voltage difference across the membrane. Can form functional homotetrameric channels and heterotetrameric channels that contain variable proportions of KCNA1, KCNA2, KCNA4, KCNA5, and possibly other family members as well; channel properties depend on the type of alpha subunits that are part of the channel. Channel properties are modulated by cytoplasmic beta subunits that regulate the subcellular location of the alpha subunits and promote rapid inactivation. Homotetrameric channels display rapid activation and slow inactivation. Required for normal electrical conduction including formation of the infranodal ventricular conduction system and normal action potential configuration, as a result of its interaction with XIRP2. May play a role in regulating the secretion of insulin in normal pancreatic islets. In Oryctolagus cuniculus (Rabbit), this protein is Potassium voltage-gated channel subfamily A member 5 (KCNA5).